Here is a 191-residue protein sequence, read N- to C-terminus: Protein Ves (191 aa).

This sequence belongs to the Ves family.

In Escherichia fergusonii (strain ATCC 35469 / DSM 13698 / CCUG 18766 / IAM 14443 / JCM 21226 / LMG 7866 / NBRC 102419 / NCTC 12128 / CDC 0568-73), this protein is Protein Ves.